A 174-amino-acid polypeptide reads, in one-letter code: Large ribosomal subunit protein uL10 (174 aa).

Belongs to the universal ribosomal protein uL10 family. As to quaternary structure, part of the ribosomal stalk of the 50S ribosomal subunit. The N-terminus interacts with L11 and the large rRNA to form the base of the stalk. The C-terminus forms an elongated spine to which L12 dimers bind in a sequential fashion forming a multimeric L10(L12)X complex.

Its function is as follows. Forms part of the ribosomal stalk, playing a central role in the interaction of the ribosome with GTP-bound translation factors. In Anaeromyxobacter dehalogenans (strain 2CP-1 / ATCC BAA-258), this protein is Large ribosomal subunit protein uL10.